The following is a 385-amino-acid chain: Calcium/calmodulin-dependent protein kinase type 1D (385 aa).

In terms of domain architecture, Protein kinase spans 23 to 279 (FEFKETLGTG…CEQAARHPWI (257 aa)). ATP contacts are provided by residues 29–37 (LGTGAFSEV) and K52. K113 is covalently cross-linked (Glycyl lysine isopeptide (Lys-Gly) (interchain with G-Cter in SUMO2)). S122 is modified (phosphoserine). The active-site Proton acceptor is D144. At T180 the chain carries Phosphothreonine; by CaMKK1 and CaMKK2. An autoinhibitory domain region spans residues 279-319 (IAGDTALNKNIHESVSAQIRKNFAKSKWRQAFNATAVVRHM). Positions 299-320 (KNFAKSKWRQAFNATAVVRHMR) are calmodulin-binding. Residues 318–324 (HMRKLHL) carry the Nuclear export signal motif. The segment at 360-385 (SSGVSGVGAERRPRPTTVTAVHSGSK) is disordered. Positions 375 to 385 (TTVTAVHSGSK) are enriched in polar residues.

It belongs to the protein kinase superfamily. CAMK Ser/Thr protein kinase family. CaMK subfamily. Widely expressed. Highly and mostly expressed in polymorphonuclear leukocytes (neutrophilic and eosinophilic granulocytes) while little or no expression is observed in monocytes and lymphocytes.

The protein localises to the cytoplasm. The protein resides in the nucleus. It carries out the reaction L-seryl-[protein] + ATP = O-phospho-L-seryl-[protein] + ADP + H(+). The catalysed reaction is L-threonyl-[protein] + ATP = O-phospho-L-threonyl-[protein] + ADP + H(+). Its activity is regulated as follows. Activated by Ca(2+)/calmodulin. Binding of calmodulin results in conformational change that relieves intrasteric autoinhibition and allows phosphorylation of Thr-180 within the activation loop by CaMKK1 or CaMKK2. Phosphorylation of Thr-180 results in several fold increase in total activity. Unlike CaMK4, may be unable to exhibit autonomous activity after Ca(2+)/calmodulin activation. Its function is as follows. Calcium/calmodulin-dependent protein kinase that operates in the calcium-triggered CaMKK-CaMK1 signaling cascade and, upon calcium influx, activates CREB-dependent gene transcription, regulates calcium-mediated granulocyte function and respiratory burst and promotes basal dendritic growth of hippocampal neurons. In neutrophil cells, required for cytokine-induced proliferative responses and activation of the respiratory burst. Activates the transcription factor CREB1 in hippocampal neuron nuclei. May play a role in apoptosis of erythroleukemia cells. In vitro, phosphorylates transcription factor CREM isoform Beta. The chain is Calcium/calmodulin-dependent protein kinase type 1D (CAMK1D) from Homo sapiens (Human).